The chain runs to 245 residues: Outer membrane protein assembly factor BamD (245 aa).

Residues M1 to G19 form the signal peptide. A lipid anchor (N-palmitoyl cysteine) is attached at C20. C20 carries the S-diacylglycerol cysteine lipid modification.

Belongs to the BamD family. In terms of assembly, part of the Bam complex, which is composed of the outer membrane protein BamA, and four lipoproteins BamB, BamC, BamD and BamE.

The protein localises to the cell outer membrane. Its function is as follows. Part of the outer membrane protein assembly complex, which is involved in assembly and insertion of beta-barrel proteins into the outer membrane. Constitutes, with BamA, the core component of the assembly machinery. This Escherichia coli O157:H7 protein is Outer membrane protein assembly factor BamD.